A 351-amino-acid polypeptide reads, in one-letter code: Methylxanthine N1-demethylase NdmA (351 aa).

A Rieske domain is found at 17-125; sequence WHPVCTVTEL…CEERYGLIWI (109 aa). [2Fe-2S] cluster-binding residues include Cys62, His64, Cys81, and His84.

[2Fe-2S] cluster serves as cofactor.

It carries out the reaction caffeine + NADH + O2 + H(+) = theobromine + formaldehyde + NAD(+) + H2O. The catalysed reaction is caffeine + NADPH + O2 + H(+) = theobromine + formaldehyde + NADP(+) + H2O. The enzyme catalyses theophylline + NADH + O2 + H(+) = 3-methylxanthine + formaldehyde + NAD(+) + H2O. It catalyses the reaction theophylline + NADPH + O2 + H(+) = 3-methylxanthine + formaldehyde + NADP(+) + H2O. It carries out the reaction 1,7-dimethylxanthine + NADH + O2 + H(+) = 7-methylxanthine + formaldehyde + NAD(+) + H2O. The catalysed reaction is 1,7-dimethylxanthine + NADPH + O2 + H(+) = 7-methylxanthine + formaldehyde + NADP(+) + H2O. It participates in alkaloid degradation. Involved in the caffeine degradation, which is the essential first step for assimilating the carbon and nitrogen in caffeine. Catalyzes the N1-demethylation of caffeine to produce theobromine and formaldehyde. Also catalyzes the N1-demethylation of theophylline, paraxanthine, and 1-methylxanthine to 3-methylxanthine, 7-methylxanthine, and xanthine, respectively. NADH is the preferred substrate. This Pseudomonas putida (Arthrobacter siderocapsulatus) protein is Methylxanthine N1-demethylase NdmA (ndmA).